The sequence spans 869 residues: Mismatch repair endonuclease PMS2 (869 aa).

Positions 44, 69, 108, 109, and 110 each coordinate ATP. The Nuclear localization signal motif lies at 585-588 (RRFK).

The protein belongs to the DNA mismatch repair MutL/HexB family.

Its subcellular location is the nucleus. The enzyme catalyses ATP + H2O = ADP + phosphate + H(+). In terms of biological role, component of the post-replicative DNA mismatch repair system (MMR). Involved in B cell growth by positively regulating B cell proliferation and controlling replication efficiency. Controls cell cycle to prevent re-replication and defects in DNA damage-induced G2 checkpoint. Doesn't seem to counteract or control the immunoglobulin gene conversion (Ig GC) and to contribute to guanine/uracil mismatch repair. Possesses an ATPase activity, but in the absence of gross structural changes, ATP hydrolysis may not be necessary for proficient mismatch repair. This chain is Mismatch repair endonuclease PMS2, found in Gallus gallus (Chicken).